The chain runs to 151 residues: MLAGCYPRPGDLLTRVLATGTFDILHPGHVYFLTQARALGDELFVIIARDSNVTHKPKPIVPEEQRLEMVNALGTVDKALLGSEKDMFEPLKEIRPDIIVLGYDQHFDIELLEEELTKRGLPAKVVRVPLSKECPLCSTGAIIKAVLKRYG.

Residues 21-22 (TF), 26-29 (HPGH), and Asp104 contribute to the ATP site.

It belongs to the archaeal FAD synthase family. In terms of assembly, homodimer. The cofactor is a divalent metal cation.

The catalysed reaction is FMN + ATP + H(+) = FAD + diphosphate. Its pathway is cofactor biosynthesis; FAD biosynthesis; FAD from FMN: step 1/1. Its function is as follows. Catalyzes the transfer of the AMP portion of ATP to flavin mononucleotide (FMN) to produce flavin adenine dinucleotide (FAD) coenzyme. This Methanosarcina acetivorans (strain ATCC 35395 / DSM 2834 / JCM 12185 / C2A) protein is FAD synthase.